The primary structure comprises 654 residues: MSQVLFQQLVPLLVKCKDCEERRGSVRVSIELQSLSNPVHRKDLVIRLTDDTDPFFLYNLVISEEDFQSLKLQQGLLVDFLAFPQKFIDLLQQCMQEHAKETPRFLLQLLSSATLLENSPVLLNVVETNPFKHLIHLSLKLLPGNDVEIKKFLAGCLKCSKEEKLSLTRSLDDVTRQLHITQETLSEKMQELDKLRSEWASHTASLTNKHSQELTAEKEKALQTQVQCQQQHEQQKKELETLHQRNIHQLQSRLSELEAANKELTERKYKGDSTVRELKAKLAGVEEELQRAKQEVLSLRRENCTLDTECHEKEKHINQLQTKVAVLEQEIKDKDQLVLRTKEAFDTIQEQKVALEENGEKNQIQLGKLEATIKSLSAELLKANEIIKKLQGDLKTLMGKLKLKNTVTIQQEKLLAEKEEMLQKERKESQDAGQFLRAKEQEVCRLQEQLETTVQKLEESKQLLKNNEKLITWLNKELNENQLVRKQDTLGTSATPHSTSNSTIRSGLSPNLNVVDRLNYPSCGIGYPVSSALTFQNAFPHVVAAKNTSHPISGPKVHFNLQLTKPSASIDGQPGAAVNRPCSNDKENGETLGLESKYLKRREASIPLRGLSQNLLSDSDHQKDGMLGAFQLSSKPTVLPSSSSAYFPGQLPSS.

A PISA domain is found at 39–91 (VHRKDLVIRLTDDTDPFFLYNLVISEEDFQSLKLQQGLLVDFLAFPQKFIDLL). The stretch at 175–471 (TRQLHITQET…QLLKNNEKLI (297 aa)) forms a coiled coil. Serine 509 is modified (phosphoserine). Positions 568 to 589 (ASIDGQPGAAVNRPCSNDKENG) are disordered. Serine 612 carries the phosphoserine modification. Low complexity predominate over residues 634 to 644 (SKPTVLPSSSS). The interval 634–654 (SKPTVLPSSSSAYFPGQLPSS) is disordered. Serine 654 bears the Phosphoserine mark.

As to quaternary structure, nine homodimers form a cartwheel structure with an internal diameter of 23 nm and radial spokes connecting to the microtubule triplets. Forms a complex with CPAP and STIL. Interacts with FBXW5. Interacts with NUP62 and TUBG1 at the centrosome. Interacts with CENATAC; the interaction increases with CENATAC acetylation. Interacts with FZR1; the interaction is regulated by CENATAC and leads to SASS6 proteasomal degradation. Ubiquitinated by the SCF(FBXW5) E3 ubiquitin-protein ligase complex during S phase, leading to its degradation and preventing centriole reduplication. Ubiquitinated by the anaphase promoting complex/cyclosome (APC/C) E3 ubiquitin-protein ligase complex, leading to its degradation and preventing centriole reduplication.

The protein localises to the cytoplasm. Its subcellular location is the cytoskeleton. It localises to the microtubule organizing center. It is found in the centrosome. The protein resides in the centriole. Central scaffolding component of the centrioles ensuring their 9-fold symmetry. Required for centrosome biogenesis and duplication. Required both for mother-centriole-dependent centriole duplication and deuterosome-dependent centriole amplification in multiciliated cells. Not required for centriole formation in embryonic stem cells but necessary to maintain centriole architecture. Required for the recruitment of STIL to the procentriole and for STIL-mediated centriole amplification. This Mus musculus (Mouse) protein is Spindle assembly abnormal protein 6 homolog.